Consider the following 122-residue polypeptide: Ribosome-binding factor A (122 aa).

It belongs to the RbfA family. In terms of assembly, monomer. Binds 30S ribosomal subunits, but not 50S ribosomal subunits or 70S ribosomes.

Its subcellular location is the cytoplasm. Its function is as follows. One of several proteins that assist in the late maturation steps of the functional core of the 30S ribosomal subunit. Associates with free 30S ribosomal subunits (but not with 30S subunits that are part of 70S ribosomes or polysomes). Required for efficient processing of 16S rRNA. May interact with the 5'-terminal helix region of 16S rRNA. This is Ribosome-binding factor A from Syntrophomonas wolfei subsp. wolfei (strain DSM 2245B / Goettingen).